Here is a 219-residue protein sequence, read N- to C-terminus: Probable glutathione S-transferase MSR-1 (219 aa).

Residues 4 to 83 (NNVVLLDFSG…YIDEVWHEKC (80 aa)) form the GST N-terminal domain. Residues serine 14, lysine 41, isoleucine 55, and 67-68 (ES) each bind glutathione. In terms of domain architecture, GST C-terminal spans 89–208 (DPYQRSQARF…LPHPHKIYDF (120 aa)).

It belongs to the GST superfamily. HSP26 family.

It carries out the reaction RX + glutathione = an S-substituted glutathione + a halide anion + H(+). Its function is as follows. May play an important role in hormonal and growth regulatory responses. The protein is Probable glutathione S-transferase MSR-1 (MSR-1) of Nicotiana plumbaginifolia (Leadwort-leaved tobacco).